The chain runs to 159 residues: Ribosome maturation factor RimP (159 aa).

The protein belongs to the RimP family.

The protein localises to the cytoplasm. In terms of biological role, required for maturation of 30S ribosomal subunits. The protein is Ribosome maturation factor RimP of Geotalea daltonii (strain DSM 22248 / JCM 15807 / FRC-32) (Geobacter daltonii).